The chain runs to 519 residues: Cell adhesion molecule CEACAM1 (519 aa).

The N-terminal stretch at 1-34 is a signal peptide; it reads MELASARLLRGQIPWRGLLLTASLLTYWSPLTTA. Pyrrolidone carboxylic acid is present on Q35. At 35–425 the chain is on the extracellular side; that stretch reads QVTVDAVPPN…QGNSGLSEGA (391 aa). Residues 39–142 are required for homophilic binding; sequence DAVPPNVVEE…QTSVQFRVYP (104 aa). Positions 42–140 constitute an Ig-like V-type domain; it reads PPNVVEEKSV…PIQTSVQFRV (99 aa). N87, N104, N113, N148, N152, N173, N197, N224, N256, N288, N292, N302, N315, and N331 each carry an N-linked (GlcNAc...) asparagine glycan. 3 Ig-like C2-type domains span residues 147–232, 237–317, and 325–403; these read PNVT…FNLD, PDAP…KNIT, and PSIQ…FRIS. A disulfide bridge connects residues C167 and C215. C259 and C299 form a disulfide bridge. C344 and C392 form a disulfide bridge. N374 carries N-linked (GlcNAc...) asparagine; atypical glycosylation. Residues 426–446 traverse the membrane as a helical segment; it reads IAGIVIGSVAGVALIAALAYF. The interval 445 to 457 is interaction with calmodulin; it reads YFLYSRKTGGGSD. Residues 447 to 519 are Cytoplasmic-facing; the sequence is LYSRKTGGGS…ETVYSVVKKK (73 aa). Positions 447–519 are interaction with FLNA; it reads LYSRKTGGGS…ETVYSVVKKK (73 aa). The interval 455–519 is disordered; that stretch reads GSDHRDLTEH…ETVYSVVKKK (65 aa). A compositionally biased stretch (basic and acidic residues) spans 456–466; the sequence is SDHRDLTEHKP. Residues 484 to 519 form a required for interaction with PTPN11 and PTPN6 and for control of phosphorylation level region; sequence DDVSYSVLNFNAQQSKRPTSASSSPTETVYSVVKKK. The residue at position 488 (Y488) is a Phosphotyrosine; by SRC, LCK, INSR and EGFR. Over residues 489–512 the composition is skewed to polar residues; sequence SVLNFNAQQSKRPTSASSSPTETV. The residue at position 503 (S503) is a Phosphoserine. Y513 carries the phosphotyrosine; by INSR, SRC and LCK modification. Residues 513–516 are essential for interaction with PTPN11 and PTPN6; sequence YSVV.

It belongs to the immunoglobulin superfamily. CEA family. Monomer. Oligomer. Heterodimer. Homodimer. Cis-dimer/oligomer (via Ig-like C2-type and/or via cytoplasmic domains); induced by trans-homophilic cell adhesion through an allosteric mechanism transmitted by the Ig-like V-type domain, and is regulated by intracellular calcium and calmodulin. Interacts (via cytoplasmic domain) with calmodulin in a calcium dependent manner; reduces homophilic cell adhesion through dissociation of dimer. Isoform 1 interacts (via cytoplasmic domain) with PTPN11 (preferentially) and PTPN6; cis-homodimer form is preferred; this interaction is decreased by formation of isoform 1 / isoform 2 cis-heterodimers and is dependent on the monomer/dimer equilibrium; this interaction is phosphorylation-dependent. Isoform 1 interacts with LYN. Isoform 1 interacts (via cytoplasmic domain) with SRC (via SH2 domain); this interaction is regulated by trans-homophilic cell adhesion. Isoform 1 interacts (via cytoplasmic domain) with LCK; mediates phosphorylation at Tyr-488 and Tyr-513 resulting in PTPN6 association. Isoform 1 interacts with PTPN6; this interaction is phosphorylation-dependent and causes a profound decrease in TCR stimulation-induced CD247 and ZAP70 phosphorylation. Isoform 1 interacts with TCR/CD3 complex through TCR beta chain and CD3E; colocalizes at the cell surface and upon stimulation of the TCR/CD3 complex recruits PTPN6 in the TCR/CD3 complex, resulting in dephosphorylation of CD247 and ZAP70. Isoform 1 interacts (via cytoplasmic domain) with SHC1 (via SH2 domain); SHC1 mediates interaction with INSR or EGFR in a Ser-503 phosphorylation-dependent manner. Isoform 1 interacts with EGFR; the interaction is indirect. Isoform 1 interacts with CSF3R; down-regulates the CSF3R-STAT3 pathway through recruitment of PTPN6 that dephosphorylates CSF3R. Isoform 1 (phosphorylated form) interacts with TLR4 and SYK; recruits PTPN6 that dephosphorylates SYK, reducing the production of reactive oxygen species (ROS) and lysosome disruption, leading to a reduction of the inflammasome activity. Isoform 1 interacts with FLNA; inhibits cell migration and cell scattering by interfering with the interaction of FLNA with RALA. Isoform 1 interacts (via cytoplasmic domain) with PXN; the interaction is phosphotyrosyl-dependent. Isoform 1 interacts with KLRK1; recruits PTPN6 that dephosphorylates VAV1. Isoform 1 interacts with CEACAM8. Isoform 1 interacts with FASN; this interaction is insulin and phosphorylation-dependent; reduces fatty-acid synthase activity. Interacts (via Ig-like V-type) with HAVCR2 (via Ig-like V-type); facilitates the maturation and cell surface expression of HAVCR2 thereby regulating T-cell tolerance induction. Isoform 2 interacts (via the cytoplasmic domain) with ANXA2; this interaction is regulated by phosphorylation and appears in the AIIt complex. Interacts (via Lewis X moieties) with CD209 (via C-type lectin domain); this interaction is regulated by the glycosylation pattern of CEACAM1 on cell types and regulates contact between dendritic cells and neutrophils. In terms of processing, phosphorylated on serine and tyrosine. Isoform 1 is phosphorylated on tyrosine by Src family kinases like SRC and LCK and by receptor like CSF3R, EGFR and INSR upon stimulation. Phosphorylated at Ser-503; mediates activity. Phosphorylated at Tyr-488; regulates activity. Phosphorylated at Tyr-488 by EGFR and INSR upon stimulation; this phosphorylation is Ser-503-phosphorylation-dependent; mediates cellular internalization; increases interaction with FASN. Phosphorylated at Tyr-488 and Tyr-513 by LCK; mediates PTPN6 association and is regulated by homophilic ligation of CEACAM1 in the absence of T-cell activation. Phosphorylated at Tyr-513; mediates interaction with PTPN11. Post-translationally, phosphorylated on serine and threonine. Expressed in epithelia, vessel endothelia, leukocytes and platelets. Isoform 1 and isoform 2 are highly expressed in liver and intestine, moderately in lung, and weakly in muscle, kidney, and spleen. Expressed in granulocytes, lymphocytes, granulocytes, B cells, and T-cells.

Its subcellular location is the cell membrane. The protein resides in the lateral cell membrane. It is found in the apical cell membrane. The protein localises to the basal cell membrane. It localises to the cell junction. Its subcellular location is the adherens junction. The protein resides in the cytoplasmic vesicle. It is found in the secretory vesicle. The protein localises to the cell projection. It localises to the microvillus membrane. Cell adhesion protein that mediates homophilic cell adhesion in a calcium-independent manner. Plays a role as coinhibitory receptor in immune response, insulin action and also functions as an activator during angiogenesis. Its coinhibitory receptor function is phosphorylation- and PTPN6 -dependent, which in turn, suppress signal transduction of associated receptors by dephosphorylation of their downstream effectors. Plays a role in immune response, of T-cells, natural killer (NK) and neutrophils. Upon TCR/CD3 complex stimulation, inhibits TCR-mediated cytotoxicity by blocking granule exocytosis by mediating homophilic binding to adjacent cells, allowing interaction with and phosphorylation by LCK and interaction with the TCR/CD3 complex which recruits PTPN6 resulting in dephosphorylation of CD247 and ZAP70. Also inhibits T-cell proliferation and cytokine production through inhibition of JNK cascade and plays a crucial role in regulating autoimmunity and anti-tumor immunity by inhibiting T-cell through its interaction with HAVCR2. Upon natural killer (NK) cells activation, inhibit KLRK1-mediated cytolysis of CEACAM1-bearing tumor cells by trans-homophilic interactions with CEACAM1 on the target cell and lead to cis-interaction between CEACAM1 and KLRK1, allowing PTPN6 recruitment and then VAV1 dephosphorylation. Upon neutrophils activation negatively regulates IL1B production by recruiting PTPN6 to a SYK-TLR4-CEACAM1 complex, that dephosphorylates SYK, reducing the production of reactive oxygen species (ROS) and lysosome disruption, which in turn, reduces the activity of the inflammasome. Down-regulates neutrophil production by acting as a coinhibitory receptor for CSF3R by downregulating the CSF3R-STAT3 pathway through recruitment of PTPN6 that dephosphorylates CSF3R. Also regulates insulin action by promoting INS clearance and regulating lipogenesis in liver through regulating insulin signaling. Upon INS stimulation, undergoes phosphorylation by INSR leading to INS clearance by increasing receptor-mediated insulin endocytosis. This inernalization promotes interaction with FASN leading to receptor-mediated insulin degradation and to reduction of FASN activity leading to negative regulation of fatty acid synthesis. INSR-mediated phosphorylation also provokes a down-regulation of cell proliferation through SHC1 interaction resulting in decrease coupling of SHC1 to the MAPK3/ERK1-MAPK1/ERK2 and phosphatidylinositol 3-kinase pathways. Functions as activator in angiogenesis by promoting blood vessel remodeling through endothelial cell differentiation and migration and in arteriogenesis by increasing the number of collateral arteries and collateral vessel calibers after ischemia. Also regulates vascular permeability through the VEGFR2 signaling pathway resulting in control of nitric oxide production. Down-regulates cell growth in response to EGF through its interaction with SHC1 that mediates interaction with EGFR resulting in decrease coupling of SHC1 to the MAPK3/ERK1-MAPK1/ERK2 pathway. Negatively regulates platelet aggregation by decreasing platelet adhesion on type I collagen through the GPVI-FcRgamma complex. Inhibits cell migration and cell scattering through interaction with FLNA; interferes with the interaction of FLNA with RALA. Mediates bile acid transport activity in a phosphorylation dependent manner. Negatively regulates osteoclastogenesis. In terms of biological role, cell adhesion proteins that mediates homophilic cell adhesion in a calcium-independent manner. Promotes populations of T-cells regulating IgA production and secretion associated with control of the commensal microbiota and resistance to enteropathogens. The sequence is that of Cell adhesion molecule CEACAM1 from Rattus norvegicus (Rat).